Here is a 223-residue protein sequence, read N- to C-terminus: Urease accessory protein UreF (223 aa).

The protein belongs to the UreF family. In terms of assembly, ureD, UreF and UreG form a complex that acts as a GTP-hydrolysis-dependent molecular chaperone, activating the urease apoprotein by helping to assemble the nickel containing metallocenter of UreC. The UreE protein probably delivers the nickel.

Its subcellular location is the cytoplasm. Functionally, required for maturation of urease via the functional incorporation of the urease nickel metallocenter. This chain is Urease accessory protein UreF, found in Agrobacterium fabrum (strain C58 / ATCC 33970) (Agrobacterium tumefaciens (strain C58)).